Consider the following 387-residue polypeptide: Putative transmembrane protein At3g54730 (387 aa).

Residues Pro10–Ala25 are compositionally biased toward pro residues. The segment at Pro10–Pro45 is disordered. 8 consecutive transmembrane segments (helical) span residues Val97–Val117, Gly128–Phe148, Val154–Leu174, Val186–Ile206, Ile221–Ile241, Ser292–Glu312, Phe335–Phe355, and Pro362–Phe382.

It localises to the membrane. The polypeptide is Putative transmembrane protein At3g54730 (Arabidopsis thaliana (Mouse-ear cress)).